The following is a 652-amino-acid chain: Spermatogenesis-associated protein 13 (652 aa).

The segment at Met1 to Pro24 is disordered. At Ser78 the chain carries Phosphoserine. The interval Ile81–Leu108 is disordered. Residues Ser98 to Val150 are ABR (APC-binding region) domain. Ser114 is subject to Phosphoserine. An SH3 domain is found at Gly147 to Asn206. A disordered region spans residues Glu209 to Glu235. Residues Met240 to Arg424 form the DH domain. The 107-residue stretch at Glu455–Arg561 folds into the PH domain. Positions Arg561–Lys652 are C-terminal tail.

Interacts (via ABR and SH3 domain) with APC. The binding of APC enhances its GEF activity by relieving it from an autoinhibitory conformation, in which the ABR and SH3 domains are associated with the C-terminal tail. Interacts (via C-terminal tail) with PPP1R9B (via C-terminus). Interacts with RAC1. Expressed at high levels in the placenta, spleen and kidney, at moderate levels in lung, small intestine, liver, brain and heart, and at low levels in skeletal muscle. Expression is aberrantly enhanced in most colorectal tumors.

Its subcellular location is the cytoplasm. It is found in the cell projection. The protein localises to the filopodium. The protein resides in the lamellipodium. It localises to the ruffle membrane. Its subcellular location is the podosome. With respect to regulation, both the ABR and the SH3 domains contribute to maintaining the protein in an inhibited conformation by associating with the C-terminal tail. Binding of these domains to the C-terminal tail inhibits the activity of the protein by blocking a region that is required for its GEF activity. Acts as a guanine nucleotide exchange factor (GEF) for RHOA, RAC1 and CDC42 GTPases. Regulates cell migration and adhesion assembly and disassembly through a RAC1, PI3K, RHOA and AKT1-dependent mechanism. Increases both RAC1 and CDC42 activity, but decreases the amount of active RHOA. Required for MMP9 up-regulation via the JNK signaling pathway in colorectal tumor cells. Involved in tumor angiogenesis and may play a role in intestinal adenoma formation and tumor progression. This Homo sapiens (Human) protein is Spermatogenesis-associated protein 13.